Consider the following 126-residue polypeptide: MHLSQLLACALLLTLLSLRPSEAKPGAPPKVPRTPPAEELAEPQAAGGGQKKGDKAPGGGGANLKGDRSRLLRDLRVDTKSRAAWARLLQEHPNARKYKGANKKGLSKGCFGLKLDRIGSMSGLGC.

The first 23 residues, 1–23 (MHLSQLLACALLLTLLSLRPSEA), serve as a signal peptide directing secretion. The disordered stretch occupies residues 20-71 (PSEAKPGAPPKVPRTPPAEELAEPQAAGGGQKKGDKAPGGGGANLKGDRSRL). The propeptide occupies 24–73 (KPGAPPKVPRTPPAEELAEPQAAGGGQKKGDKAPGGGGANLKGDRSRLLR). The segment covering 26–35 (GAPPKVPRTP) has biased composition (pro residues). The segment covering 46–63 (AGGGQKKGDKAPGGGGAN) has biased composition (gly residues). Cysteines 110 and 126 form a disulfide.

The protein belongs to the natriuretic peptide family. Degraded by IDE (in vitro). In the kidney, predominantly expressed in the distal tubular cells (at protein level).

It localises to the secreted. Its function is as follows. Hormone which plays a role in endochondral ossification through regulation of cartilaginous growth plate chondrocytes proliferation and differentiation. May also be vasoactive and natriuretic. Acts by specifically binding and stimulating NPR2 to produce cGMP. Binds the clearance receptor NPR3. The protein is C-type natriuretic peptide (NPPC) of Homo sapiens (Human).